A 1291-amino-acid polypeptide reads, in one-letter code: 1-phosphatidylinositol 4,5-bisphosphate phosphodiesterase gamma-1 (1291 aa).

Ala-2 is subject to N-acetylalanine. Residues 27–142 enclose the PH 1 domain; that stretch reads RSLEVGTVMT…WIRGLTWLME (116 aa). In terms of domain architecture, EF-hand spans 152 to 187; the sequence is QIERWLRKQFYSVDRNREDRISAKDLKNMLSQVNYR. Ca(2+)-binding residues include Asp-165, Asn-167, Glu-169, Arg-171, and Asp-176. The PI-PLC X-box domain occupies 320–464; the sequence is DTMNNPLSHY…LKRKILIKHK (145 aa). Residues His-335 and His-380 contribute to the active site. The region spanning 489-523 is the PH 2; first part domain; sequence SIKNGILYLEDPVNHEWYPHYFVLTSSKIYYSEET. Tyr-506 is subject to Phosphotyrosine. The interval 522–544 is disordered; that stretch reads ETSSDQGNEDEEEPKEASGSTEL. 2 consecutive SH2 domains span residues 550-657 and 668-756; these read WFHG…SEPV and WYHA…RYPI. Tyr-771 is subject to Phosphotyrosine; by SYK. Residues Tyr-775 and Tyr-783 each carry the phosphotyrosine modification. A Phosphotyrosine; by ITK, SYK and TXK modification is found at Tyr-783. Residues 791–851 form the SH3 domain; it reads TFKCAVKALF…PSNYVEEMVS (61 aa). Residues 895 to 931 form the PH 2; second part domain; it reads FVFSISMASVAHWSLDVAADSQEELQDWVKKIREVAQ. Positions 953–1070 constitute a PI-PLC Y-box domain; that stretch reads LSELVVYCRP…GYVLQPSVMR (118 aa). Tyr-977 carries the post-translational modification Phosphotyrosine. Residues 1071-1194 enclose the C2 domain; that stretch reads DEAFDPFDKS…TGYRAVPLKN (124 aa). Ser-1222, Ser-1228, and Ser-1249 each carry phosphoserine. At Tyr-1254 the chain carries Phosphotyrosine. A Phosphoserine modification is found at Ser-1264. The segment at 1271–1291 is disordered; that stretch reads HFDGRDRRTPRRTRVNGDNRL.

In terms of assembly, interacts with AGAP2 via its SH3 domain. Interacts (via SH2 domain) with RET. Interacts with FLT1 (tyrosine-phosphorylated). Interacts (via SH2 domain) with FGFR1, FGFR2, FGFR3 and FGFR4 (phosphorylated). Interacts with LAT (phosphorylated) upon TCR activation. Interacts (via SH3 domain) with the Pro-rich domain of TNK1. Associates with BLNK, VAV1, GRB2 and NCK1 in a B-cell antigen receptor-dependent fashion. Interacts with CBLB in activated T-cells; which inhibits phosphorylation. Interacts with SHB. Interacts (via SH3 domain) with the Arg/Gly-rich-flanked Pro-rich domains of KHDRBS1/SAM68. This interaction is selectively regulated by arginine methylation of KHDRBS1/SAM68. Interacts with INPP5D/SHIP1, THEMIS and CLNK. Interacts with AXL, FLT4 and KIT. Interacts with RALGPS1. Interacts (via the SH2 domains) with VIL1 (phosphorylated at C-terminus tyrosine phosphorylation sites). Interacts (via SH2 domain) with PDGFRA and PDGFRB (tyrosine phosphorylated). Interacts with PIP5K1C. Interacts with NTRK1 and NTRK2 (phosphorylated upon ligand-binding). Interacts with SYK; activates PLCG1. Interacts with GRB2, LAT and THEMIS upon TCR activation in thymocytes. Interacts with TESPA1; the association is increased with prolonged stimulation of the TCR and may facilitate the assembly of the LAT signalosome. Interacts (via C-terminal proline-rich domain (PRD)) with PLCG1 (via SH3 domain); this interaction leads to guanine nucleotide exchange from PlCG1 to DNM1 and enhances DNM1-dependent endocytosis. Ca(2+) is required as a cofactor. Ubiquitinated by CBLB in activated T-cells. Post-translationally, tyrosine phosphorylated in response to signaling via activated FLT3, KIT and PDGFRA. Tyrosine phosphorylated by activated FGFR1, FGFR2, FGFR3 and FGFR4. Tyrosine phosphorylated by activated FLT1 and KDR. Tyrosine phosphorylated by activated PDGFRB. The receptor-mediated activation of PLCG1 involves its phosphorylation by tyrosine kinases, in response to ligation of a variety of growth factor receptors and immune system receptors. For instance, SYK phosphorylates and activates PLCG1 in response to ligation of the B-cell receptor. May be dephosphorylated by PTPRJ. Phosphorylated by ITK and TXK on Tyr-783 upon TCR activation in T-cells.

It localises to the cell projection. The protein localises to the lamellipodium. It is found in the ruffle. The enzyme catalyses a 1,2-diacyl-sn-glycero-3-phospho-(1D-myo-inositol-4,5-bisphosphate) + H2O = 1D-myo-inositol 1,4,5-trisphosphate + a 1,2-diacyl-sn-glycerol + H(+). The catalysed reaction is a 1,2-diacyl-sn-glycero-3-phospho-(1D-myo-inositol) + H2O = 1D-myo-inositol 1-phosphate + a 1,2-diacyl-sn-glycerol + H(+). Activated by phosphorylation on tyrosine residues. In terms of biological role, mediates the production of the second messenger molecules diacylglycerol (DAG) and inositol 1,4,5-trisphosphate (IP3). Plays an important role in the regulation of intracellular signaling cascades. Becomes activated in response to ligand-mediated activation of receptor-type tyrosine kinases, such as PDGFRA, PDGFRB, EGFR, FGFR1, FGFR2, FGFR3 and FGFR4. Plays a role in actin reorganization and cell migration. Guanine nucleotide exchange factor that binds the GTPase DNM1 and catalyzes the dissociation of GDP, allowing a GTP molecule to bind in its place, therefore enhancing DNM1-dependent endocytosis. The protein is 1-phosphatidylinositol 4,5-bisphosphate phosphodiesterase gamma-1 of Bos taurus (Bovine).